Reading from the N-terminus, the 239-residue chain is Small ribosomal subunit protein uS2 (239 aa).

This sequence belongs to the universal ribosomal protein uS2 family.

The sequence is that of Small ribosomal subunit protein uS2 from Parasynechococcus marenigrum (strain WH8102).